Here is a 322-residue protein sequence, read N- to C-terminus: uncharacterized protein (322 aa).

A compositionally biased stretch (polar residues) spans 1–13 (MTNADEQNMGQQE). Disordered stretches follow at residues 1 to 94 (MTNA…EEYE) and 125 to 322 (RREM…TDEE). The span at 14–31 (GTDTATTAQDTNTQTVGT) shows a compositional bias: low complexity. Polar residues predominate over residues 32–50 (QSENTQNTQQASDAQTEQT). Over residues 64-75 (EVDEDDVLDAQE) the composition is skewed to acidic residues. Basic and acidic residues-rich tracts occupy residues 141–227 (GGDR…RGGD), 235–269 (RPRE…RGGD), 277–295 (RPRE…RTDD), and 308–322 (ARAD…TDEE).

This is an uncharacterized protein from Deinococcus radiodurans (strain ATCC 13939 / DSM 20539 / JCM 16871 / CCUG 27074 / LMG 4051 / NBRC 15346 / NCIMB 9279 / VKM B-1422 / R1).